Consider the following 384-residue polypeptide: Protein RecA (384 aa).

Position 76–83 (76–83 (GPESSGKT)) interacts with ATP. Residues 346 to 365 (QGSAEPEKAAKPEKVEKADK) are disordered. Positions 350–365 (EPEKAAKPEKVEKADK) are enriched in basic and acidic residues.

Belongs to the RecA family.

It is found in the cytoplasm. In terms of biological role, can catalyze the hydrolysis of ATP in the presence of single-stranded DNA, the ATP-dependent uptake of single-stranded DNA by duplex DNA, and the ATP-dependent hybridization of homologous single-stranded DNAs. It interacts with LexA causing its activation and leading to its autocatalytic cleavage. The chain is Protein RecA from Polaromonas naphthalenivorans (strain CJ2).